A 348-amino-acid polypeptide reads, in one-letter code: Dihydroorotase (348 aa).

His17 and His19 together coordinate Zn(2+). Substrate contacts are provided by residues 19-21 and Asn45; that span reads HLR. 3 residues coordinate Zn(2+): Lys103, His140, and His178. Lys103 carries the N6-carboxylysine modification. A substrate-binding site is contributed by His140. Residue Leu223 coordinates substrate. Position 251 (Asp251) interacts with Zn(2+). Asp251 is a catalytic residue. His255 and Ala267 together coordinate substrate.

The protein belongs to the metallo-dependent hydrolases superfamily. DHOase family. Class II DHOase subfamily. In terms of assembly, homodimer. It depends on Zn(2+) as a cofactor.

The enzyme catalyses (S)-dihydroorotate + H2O = N-carbamoyl-L-aspartate + H(+). Its pathway is pyrimidine metabolism; UMP biosynthesis via de novo pathway; (S)-dihydroorotate from bicarbonate: step 3/3. Functionally, catalyzes the reversible cyclization of carbamoyl aspartate to dihydroorotate. This is Dihydroorotase from Escherichia coli O6:K15:H31 (strain 536 / UPEC).